Here is a 728-residue protein sequence, read N- to C-terminus: Dynamin-like protein 1 (728 aa).

The assembly domain, required for tetramerization stretch occupies residues 1 to 119; the sequence is MKELFQKIWQ…ILQEKVQSID (119 aa). In terms of domain architecture, Dynamin-type G spans 159 to 442; the sequence is QNLEFNIAIT…LYAGEKSKIA (284 aa). The segment at 169–176 is G1 motif; sequence GVMNAGKS. 171–177 is a GDP binding site; sequence MNAGKSS. Positions 195 to 196 are G2 motif; sequence ET. The segment at 298 to 301 is G3 motif; the sequence is DTPG. Positions 358–361 are G4 motif; sequence TKAD. Lys359 serves as a coordination point for GDP. Residue Glu388 is a region of interest, G5 motif. 400-402 is a GDP binding site; the sequence is SAK. A required for liposome binding but not for tetramerization region spans residues 470-695; the sequence is ENKQGVSEEN…LESLEKVLQS (226 aa).

The protein belongs to the TRAFAC class dynamin-like GTPase superfamily. Dynamin/Fzo/YdjA family. Forms a 2:2 heterotetramer with DLP1. DLP2 forms a central back-to-back dimer flanked on each side by a DLP1 subunit. In the crystal structures the 2 DLP1 subunits are in very different conformations.

The protein resides in the cytoplasm. It is found in the cytosol. It carries out the reaction GTP + H2O = GDP + phosphate + H(+). In terms of biological role, the heterotetrameric DLP1(2)-DLP2(2) complex tethers liposomes and may mediate their fusion. Initial binding is probably mediated by DLP1, while DLP2 couples DLP1 subunits and increases the effective reach of the complex up to 45 nm. The role of the nucleotide is unknown. This subunit alone weakly binds to liposomes; GTP, GDP, GMPPCP and GMPPNP do not change heterotetramer binding. Tetramerization is required for GTPase activity, suggesting the GTPase domains (dynamin-type G) from DLP1 and DLP2 must dimerize to reconstitute the GTPase active site. The polypeptide is Dynamin-like protein 1 (Campylobacter jejuni subsp. jejuni serotype O:23/36 (strain 81-176)).